Consider the following 152-residue polypeptide: Mitochondrial fission 1 protein (152 aa).

Met-1 carries the post-translational modification N-acetylmethionine. Topologically, residues 1–122 (MEAVLNELVS…LIDKAMKKDG (122 aa)) are cytoplasmic. Ser-10 carries the post-translational modification Phosphoserine. A TPR repeat occupies 71-104 (RDYVFYLAVGNYRLKEYEKALKYVRGLLQTEPQN). Residues 123–143 (LVGMAIVGGMALGVAGLAGLI) traverse the membrane as a helical segment. Over 144-152 (GLAVSKSKS) the chain is Mitochondrial intermembrane.

This sequence belongs to the FIS1 family. In terms of assembly, interacts with DNM1L/DLP1 through the TPR region; may form part of a larger protein complex at the endoplasmic reticulum-mitochondrial interface during mitochondrial fission. Interacts with MARCHF5. Interacts with MIEF1. Interacts with PEX11A, PEX11B and PEX11G. Ubiquitinated by MARCHF5.

The protein localises to the mitochondrion outer membrane. It localises to the peroxisome membrane. In terms of biological role, involved in the fragmentation of the mitochondrial network and its perinuclear clustering. Plays a minor role in the recruitment and association of the fission mediator dynamin-related protein 1 (DNM1L) to the mitochondrial surface and mitochondrial fission. May not be essential for the assembly of functional fission complexes and the subsequent membrane scission event. Also mediates peroxisomal fission. May act when the products of fission are directed toward mitochondrial homeostasis, mitophagy, or apoptosis. Can induce cytochrome c release from the mitochondrion to the cytosol, ultimately leading to apoptosis. The chain is Mitochondrial fission 1 protein from Rattus norvegicus (Rat).